The sequence spans 100 residues: Small ribosomal subunit protein bS20 (100 aa).

The segment covering 1–20 (MASGKPKKKNPRLASGRKRV) has biased composition (basic residues). Positions 1–21 (MASGKPKKKNPRLASGRKRVR) are disordered.

It belongs to the bacterial ribosomal protein bS20 family.

Functionally, binds directly to 16S ribosomal RNA. This Albidiferax ferrireducens (strain ATCC BAA-621 / DSM 15236 / T118) (Rhodoferax ferrireducens) protein is Small ribosomal subunit protein bS20.